The primary structure comprises 190 residues: Pyridoxal 5'-phosphate synthase subunit PdxT (190 aa).

An L-glutamine-binding site is contributed by 46–48 (GES). The active-site Nucleophile is Cys78. L-glutamine-binding positions include Arg105 and 133-134 (IR). Active-site charge relay system residues include His169 and Glu171.

This sequence belongs to the glutaminase PdxT/SNO family. In the presence of PdxS, forms a dodecamer of heterodimers. Only shows activity in the heterodimer.

It catalyses the reaction aldehydo-D-ribose 5-phosphate + D-glyceraldehyde 3-phosphate + L-glutamine = pyridoxal 5'-phosphate + L-glutamate + phosphate + 3 H2O + H(+). It carries out the reaction L-glutamine + H2O = L-glutamate + NH4(+). Its pathway is cofactor biosynthesis; pyridoxal 5'-phosphate biosynthesis. Its function is as follows. Catalyzes the hydrolysis of glutamine to glutamate and ammonia as part of the biosynthesis of pyridoxal 5'-phosphate. The resulting ammonia molecule is channeled to the active site of PdxS. The protein is Pyridoxal 5'-phosphate synthase subunit PdxT of Niallia circulans (Bacillus circulans).